Reading from the N-terminus, the 283-residue chain is Elongation factor Ts (283 aa).

Residues 79 to 82 are involved in Mg(2+) ion dislocation from EF-Tu; it reads TDFV.

The protein belongs to the EF-Ts family.

The protein localises to the cytoplasm. Its function is as follows. Associates with the EF-Tu.GDP complex and induces the exchange of GDP to GTP. It remains bound to the aminoacyl-tRNA.EF-Tu.GTP complex up to the GTP hydrolysis stage on the ribosome. The chain is Elongation factor Ts from Pseudoalteromonas translucida (strain TAC 125).